The sequence spans 487 residues: NAD(+)--arginine ADP-ribosyltransferase EFV (487 aa).

Residues 2–51 (SQLNKWQKELQALQKANYQETDNQLFNVYRQSLIDIKKRLKVYTENAESL) adopt a coiled-coil conformation. The TR mART core domain maps to 315 to 487 (LDFFGQSDLQ…DNILEVTILG (173 aa)). NAD(+) is bound by residues 346–358 (TSDAFAKMNKILR) and 394–400 (RGVSANE). Catalysis depends on residues R394, S415, and E463. An NAD(+)-binding site is contributed by E463.

Its subcellular location is the secreted. The enzyme catalyses L-arginyl-[protein] + NAD(+) = N(omega)-(ADP-D-ribosyl)-L-arginyl-[protein] + nicotinamide + H(+). In terms of biological role, a probable mono(ADP-ribosyl)transferase, it may ADP-ribosylate Arg in target protein(s). Upon expression in yeast cells causes cell death. The protein is NAD(+)--arginine ADP-ribosyltransferase EFV of Enterococcus faecalis (strain ATCC 700802 / V583).